The following is a 395-amino-acid chain: Probable alcohol dehydrogenase EutG (395 aa).

Residues Asp-57, 116 to 120 (GSVLD), 156 to 160 (TTAGT), Lys-178, and 197 to 201 (VTEGV) each bind NAD(+). Residues Asp-212, His-216, His-281, and His-295 each coordinate Fe cation. Residues His-295 and Asp-354 each coordinate NAD(+).

This sequence belongs to the iron-containing alcohol dehydrogenase family. Fe cation serves as cofactor.

It localises to the bacterial microcompartment. The catalysed reaction is ethanol + NAD(+) = acetaldehyde + NADH + H(+). The protein operates within amine and polyamine degradation; ethanolamine degradation. Functionally, probably acts on the acetaldehyde produced by the degradation of ethanolamine, producing ethanol. Its function is as follows. Expression of the eut operon allows this bacteria to use ethanolamine (EA) as a carbon, nitrogen and energy source. It relies on cobalamin (vitamin B12) both as a cofactor for the ethanolamine ammonia-lyase (EAL) activity and to induce the operon. EA enhances bacterial survival in macrophages in a concentration-dependent manner, suggesting it is an important nutrient during infection. The protein is Probable alcohol dehydrogenase EutG of Salmonella typhimurium (strain LT2 / SGSC1412 / ATCC 700720).